Here is a 127-residue protein sequence, read N- to C-terminus: Ribosome-binding factor A (127 aa).

The protein belongs to the RbfA family. Monomer. Binds 30S ribosomal subunits, but not 50S ribosomal subunits or 70S ribosomes.

It is found in the cytoplasm. One of several proteins that assist in the late maturation steps of the functional core of the 30S ribosomal subunit. Associates with free 30S ribosomal subunits (but not with 30S subunits that are part of 70S ribosomes or polysomes). Required for efficient processing of 16S rRNA. May interact with the 5'-terminal helix region of 16S rRNA. The sequence is that of Ribosome-binding factor A from Stenotrophomonas maltophilia (strain R551-3).